The sequence spans 391 residues: Adhesion defective protein 1 (391 aa).

Positions 180-190 (SQSRPPQNQIQ) are enriched in polar residues. 2 disordered regions span residues 180–217 (SQSRPPQNQIQHDGVKSEDPSSESVNINSSSSLLPDSP) and 366–391 (VEGENPNNNPNFYSSDMLNAQKRTKV). The segment covering 201 to 211 (SESVNINSSSS) has biased composition (low complexity). Residues 370-383 (NPNNNPNFYSSDML) show a composition bias toward polar residues.

It belongs to the adn1/SEU family.

The protein resides in the nucleus. Functionally, probable transcriptional regulator involved in cell adhesion. This Schizosaccharomyces pombe (strain 972 / ATCC 24843) (Fission yeast) protein is Adhesion defective protein 1 (adn1).